The chain runs to 320 residues: Aspartate carbamoyltransferase catalytic subunit (320 aa).

Carbamoyl phosphate-binding residues include R68 and T69. K96 lines the L-aspartate pocket. Residues R118, H148, and Q151 each contribute to the carbamoyl phosphate site. The L-aspartate site is built by R181 and R236. Residues G277 and P278 each coordinate carbamoyl phosphate.

It belongs to the aspartate/ornithine carbamoyltransferase superfamily. ATCase family. As to quaternary structure, heterododecamer (2C3:3R2) of six catalytic PyrB chains organized as two trimers (C3), and six regulatory PyrI chains organized as three dimers (R2).

It catalyses the reaction carbamoyl phosphate + L-aspartate = N-carbamoyl-L-aspartate + phosphate + H(+). It functions in the pathway pyrimidine metabolism; UMP biosynthesis via de novo pathway; (S)-dihydroorotate from bicarbonate: step 2/3. Catalyzes the condensation of carbamoyl phosphate and aspartate to form carbamoyl aspartate and inorganic phosphate, the committed step in the de novo pyrimidine nucleotide biosynthesis pathway. In Polaromonas naphthalenivorans (strain CJ2), this protein is Aspartate carbamoyltransferase catalytic subunit.